The primary structure comprises 377 residues: DNA methyltransferase CcrM (377 aa).

The 103-residue stretch at 271 to 373 (LGKAELTVMT…LRKIIREQMA (103 aa)) folds into the RAMA domain.

Belongs to the N(4)/N(6)-methyltransferase family.

It carries out the reaction a 2'-deoxyadenosine in DNA + S-adenosyl-L-methionine = an N(6)-methyl-2'-deoxyadenosine in DNA + S-adenosyl-L-homocysteine + H(+). In terms of biological role, a beta subtype methylase that recognizes the double-stranded sequence 5'-GANTC-3' and methylates on A-2 on both strands. Overexpression from a moderate-copy number plasmid (10-12 copies/cell) leads to enlarged, branched cells, many with 3-5 genome equivalents. Contributes to the accurate cell-cycle control of DNA replication and cellular morphology. This Brucella abortus (strain 2308) protein is DNA methyltransferase CcrM.